A 488-amino-acid chain; its full sequence is Ribulose bisphosphate carboxylase large chain 1 (488 aa).

Asn127 and Thr177 together coordinate substrate. Lys179 (proton acceptor) is an active-site residue. Lys181 provides a ligand contact to substrate. Residues Lys205, Asp207, and Glu208 each coordinate Mg(2+). Residue Lys205 is modified to N6-carboxylysine. Residue His297 is the Proton acceptor of the active site. Residues Arg298, His330, and Ser382 each coordinate substrate.

It belongs to the RuBisCO large chain family. Type I subfamily. In terms of assembly, heterohexadecamer of 8 large chains and 8 small chains. Mg(2+) serves as cofactor.

The enzyme catalyses 2 (2R)-3-phosphoglycerate + 2 H(+) = D-ribulose 1,5-bisphosphate + CO2 + H2O. It catalyses the reaction D-ribulose 1,5-bisphosphate + O2 = 2-phosphoglycolate + (2R)-3-phosphoglycerate + 2 H(+). In terms of biological role, ruBisCO catalyzes two reactions: the carboxylation of D-ribulose 1,5-bisphosphate, the primary event in carbon dioxide fixation, as well as the oxidative fragmentation of the pentose substrate. Both reactions occur simultaneously and in competition at the same active site. The polypeptide is Ribulose bisphosphate carboxylase large chain 1 (Bradyrhizobium sp. (strain BTAi1 / ATCC BAA-1182)).